We begin with the raw amino-acid sequence, 341 residues long: NADH-quinone oxidoreductase subunit H 2 (341 aa).

The next 8 helical transmembrane spans lie at 13–33 (IIVI…IAYI), 82–102 (GVFL…WAVI), 115–135 (VGVL…IMAG), 161–181 (IGFV…TAIV), 190–210 (MLGW…VSAL), 248–268 (YVAI…GWLP), 277–297 (WVPG…LFAM), and 317–337 (VFLP…QFAG).

The protein belongs to the complex I subunit 1 family. NDH-1 is composed of 14 different subunits. Subunits NuoA, H, J, K, L, M, N constitute the membrane sector of the complex.

It is found in the cell inner membrane. It catalyses the reaction a quinone + NADH + 5 H(+)(in) = a quinol + NAD(+) + 4 H(+)(out). In terms of biological role, NDH-1 shuttles electrons from NADH, via FMN and iron-sulfur (Fe-S) centers, to quinones in the respiratory chain. The immediate electron acceptor for the enzyme in this species is believed to be ubiquinone. Couples the redox reaction to proton translocation (for every two electrons transferred, four hydrogen ions are translocated across the cytoplasmic membrane), and thus conserves the redox energy in a proton gradient. This subunit may bind ubiquinone. The polypeptide is NADH-quinone oxidoreductase subunit H 2 (Rhodopseudomonas palustris (strain BisB5)).